A 472-amino-acid polypeptide reads, in one-letter code: Ribulose bisphosphate carboxylase large chain (472 aa).

Asn120 and Thr170 together coordinate substrate. Lys172 serves as the catalytic Proton acceptor. Lys174 is a substrate binding site. Lys198, Asp200, and Glu201 together coordinate Mg(2+). Lys198 is modified (N6-carboxylysine). The active-site Proton acceptor is His291. 3 residues coordinate substrate: Arg292, His324, and Ser376.

Belongs to the RuBisCO large chain family. Type I subfamily. Heterohexadecamer of 8 large chains and 8 small chains. It depends on Mg(2+) as a cofactor.

It is found in the carboxysome. The enzyme catalyses 2 (2R)-3-phosphoglycerate + 2 H(+) = D-ribulose 1,5-bisphosphate + CO2 + H2O. It carries out the reaction D-ribulose 1,5-bisphosphate + O2 = 2-phosphoglycolate + (2R)-3-phosphoglycerate + 2 H(+). In terms of biological role, ruBisCO catalyzes two reactions: the carboxylation of D-ribulose 1,5-bisphosphate, the primary event in carbon dioxide fixation, as well as the oxidative fragmentation of the pentose substrate in the photorespiration process. Both reactions occur simultaneously and in competition at the same active site. In Gloeothece citriformis (strain PCC 7424) (Cyanothece sp. (strain PCC 7424)), this protein is Ribulose bisphosphate carboxylase large chain.